A 313-amino-acid polypeptide reads, in one-letter code: D-alanine--D-alanine ligase (313 aa).

The 201-residue stretch at 108–308 (KLVWQQTGVP…YSELVVKVLS (201 aa)) folds into the ATP-grasp domain. 138–193 (VAKLGLPLFVKPASEGSSVAVLKVKTADALPAALAEAATHDKIVIVEKSIEGGGEY) is an ATP binding site. Asp-262, Glu-275, and Asn-277 together coordinate Mg(2+).

This sequence belongs to the D-alanine--D-alanine ligase family. Mg(2+) serves as cofactor. It depends on Mn(2+) as a cofactor.

The protein resides in the cytoplasm. It carries out the reaction 2 D-alanine + ATP = D-alanyl-D-alanine + ADP + phosphate + H(+). It functions in the pathway cell wall biogenesis; peptidoglycan biosynthesis. In terms of biological role, cell wall formation. This chain is D-alanine--D-alanine ligase, found in Burkholderia orbicola (strain MC0-3).